We begin with the raw amino-acid sequence, 345 residues long: tRNA N6-adenosine threonylcarbamoyltransferase (345 aa).

Residues His-111 and His-115 each contribute to the Fe cation site. Residues 134–138 (LVSGG), Asp-167, Gly-180, and Asn-276 contribute to the substrate site. Asp-304 is a Fe cation binding site.

Belongs to the KAE1 / TsaD family. Requires Fe(2+) as cofactor.

Its subcellular location is the cytoplasm. The enzyme catalyses L-threonylcarbamoyladenylate + adenosine(37) in tRNA = N(6)-L-threonylcarbamoyladenosine(37) in tRNA + AMP + H(+). In terms of biological role, required for the formation of a threonylcarbamoyl group on adenosine at position 37 (t(6)A37) in tRNAs that read codons beginning with adenine. Is involved in the transfer of the threonylcarbamoyl moiety of threonylcarbamoyl-AMP (TC-AMP) to the N6 group of A37, together with TsaE and TsaB. TsaD likely plays a direct catalytic role in this reaction. This Alcanivorax borkumensis (strain ATCC 700651 / DSM 11573 / NCIMB 13689 / SK2) protein is tRNA N6-adenosine threonylcarbamoyltransferase.